A 285-amino-acid polypeptide reads, in one-letter code: Putative hydrolase DDAH2 (285 aa).

His171 functions as the Proton donor in the catalytic mechanism. Catalysis depends on Cys276, which acts as the Nucleophile.

It belongs to the DDAH family. In terms of processing, phosphorylated by TBK1. Phosphorylation inhibits the translocation into the mitochondrion upon Sendai viral infection.

It localises to the cytoplasm. The protein resides in the mitochondrion. In terms of biological role, putative hydrolase with unknown substrate. Does not hydrolyze N(G),N(G)-dimethyl-L-arginine (ADMA) which acts as an inhibitor of NOS. In endothelial cells, induces expression of vascular endothelial growth factor (VEGF) via phosphorylation of the transcription factor SP1 by PKA in a process that is independent of NO and NO synthase. Similarly, enhances pancreatic insulin secretion through SP1-mediated transcriptional up-regulation of secretagogin/SCGN, an insulin vesicle docking protein. Upon viral infection, relocates to mitochondria where it promotes mitochondrial fission through activation of DNM1L leading to the inhibition of innate response activation mediated by MAVS. This is Putative hydrolase DDAH2 (DDAH2) from Bos taurus (Bovine).